A 175-amino-acid chain; its full sequence is B9 domain-containing protein 2 (175 aa).

Residues 2 to 118 (AELHIIGQII…QCVTWRPLGS (117 aa)) form the C2 B9-type domain.

The protein belongs to the B9D family. Part of the tectonic-like complex (also named B9 complex).

The protein resides in the cytoplasm. It is found in the cytoskeleton. The protein localises to the cilium basal body. It localises to the cilium axoneme. Its function is as follows. Component of the tectonic-like complex, a complex localized at the transition zone of primary cilia and acting as a barrier that prevents diffusion of transmembrane proteins between the cilia and plasma membranes. The protein is B9 domain-containing protein 2 (b9d2) of Danio rerio (Zebrafish).